We begin with the raw amino-acid sequence, 265 residues long: 4-hydroxy-tetrahydrodipicolinate reductase (265 aa).

NAD(+) is bound by residues 7-12 (GASGRM) and Asp-33. Arg-34 is a binding site for NADP(+). NAD(+) contacts are provided by residues 96–98 (GTT) and 120–123 (AANM). His-153 functions as the Proton donor/acceptor in the catalytic mechanism. Residue His-154 participates in (S)-2,3,4,5-tetrahydrodipicolinate binding. Lys-157 acts as the Proton donor in catalysis. 163-164 (GT) is a (S)-2,3,4,5-tetrahydrodipicolinate binding site.

It belongs to the DapB family.

Its subcellular location is the cytoplasm. It carries out the reaction (S)-2,3,4,5-tetrahydrodipicolinate + NAD(+) + H2O = (2S,4S)-4-hydroxy-2,3,4,5-tetrahydrodipicolinate + NADH + H(+). The enzyme catalyses (S)-2,3,4,5-tetrahydrodipicolinate + NADP(+) + H2O = (2S,4S)-4-hydroxy-2,3,4,5-tetrahydrodipicolinate + NADPH + H(+). The protein operates within amino-acid biosynthesis; L-lysine biosynthesis via DAP pathway; (S)-tetrahydrodipicolinate from L-aspartate: step 4/4. Its function is as follows. Catalyzes the conversion of 4-hydroxy-tetrahydrodipicolinate (HTPA) to tetrahydrodipicolinate. The sequence is that of 4-hydroxy-tetrahydrodipicolinate reductase from Burkholderia vietnamiensis (strain G4 / LMG 22486) (Burkholderia cepacia (strain R1808)).